A 206-amino-acid polypeptide reads, in one-letter code: Flavin reductase (NADPH) (206 aa).

Gly10, Thr12, Gly13, Thr15, Arg35, Ser38, and Arg39 together coordinate NADP(+). Residue Ser42 is modified to Phosphoserine. Residues Asp54, Val55, Leu75, and Gly76 each contribute to the NADP(+) site. The residue at position 82 (Ser82) is a Phosphoserine. NADP(+)-binding residues include Met87, Cys109, His132, His153, and Ile154. Cys109 (S-nitroso-cysteine intermediate; for S-nitroso-CoA-dependent nitrosyltransferase activity) is an active-site residue. The active-site S-nitroso-cysteine intermediate; for S-nitroso-CoA-dependent nitrosyltransferase activity is the Cys188.

Belongs to the BLVRB family. In terms of assembly, monomer.

Its subcellular location is the cytoplasm. It catalyses the reaction reduced riboflavin + NADP(+) = riboflavin + NADPH + 2 H(+). The catalysed reaction is bilirubin IXbeta + NADP(+) = biliverdin IXbeta + NADPH + H(+). The enzyme catalyses FMNH2 + NAD(+) = FMN + NADH + 2 H(+). It carries out the reaction FMNH2 + NADP(+) = FMN + NADPH + 2 H(+). It catalyses the reaction S-nitroso-CoA + L-cysteinyl-[protein] = S-nitroso-L-cysteinyl-[protein] + CoA. The catalysed reaction is L-cysteinyl-[SCAN] + S-nitroso-CoA = S-nitroso-L-cysteinyl-[SCAN] + CoA. The enzyme catalyses S-nitroso-L-cysteinyl-[SCAN] + L-cysteinyl-[protein] = L-cysteinyl-[SCAN] + S-nitroso-L-cysteinyl-[protein]. Enzyme that can both act as a NAD(P)H-dependent reductase and a S-nitroso-CoA-dependent nitrosyltransferase. Promotes fetal heme degradation during development. Also expressed in adult tissues, where it acts as a regulator of hematopoiesis, intermediary metabolism (glutaminolysis, glycolysis, TCA cycle and pentose phosphate pathway) and insulin signaling. Has a broad specificity oxidoreductase activity by catalyzing the NAD(P)H-dependent reduction of a variety of flavins, such as riboflavin, FAD or FMN, biliverdins, methemoglobin and PQQ (pyrroloquinoline quinone). Contributes to fetal heme catabolism by catalyzing reduction of biliverdin IXbeta into bilirubin IXbeta in the liver. Biliverdin IXbeta, which constitutes the major heme catabolite in the fetus is not present in adult. Does not reduce bilirubin IXalpha. Can also reduce the complexed Fe(3+) iron to Fe(2+) in the presence of FMN and NADPH. Acts as a protein nitrosyltransferase by catalyzing nitrosylation of cysteine residues of target proteins, such as HMOX2, INSR and IRS1. S-nitroso-CoA-dependent nitrosyltransferase activity is mediated via a 'ping-pong' mechanism: BLVRB first associates with both S-nitroso-CoA and protein substrate, nitric oxide group is then transferred from S-nitroso-CoA to Cys-109 and Cys-188 residues of BLVRB and from S-nitroso-BLVRB to the protein substrate. Inhibits insulin signaling by mediating nitrosylation of INSR and IRS1, leading to their inhibition. This is Flavin reductase (NADPH) (Blvrb) from Mus musculus (Mouse).